A 365-amino-acid chain; its full sequence is DNA replication and repair protein RecF (365 aa).

Residue 30–37 coordinates ATP; sequence GRNAQGKT.

This sequence belongs to the RecF family.

It localises to the cytoplasm. The RecF protein is involved in DNA metabolism; it is required for DNA replication and normal SOS inducibility. RecF binds preferentially to single-stranded, linear DNA. It also seems to bind ATP. The protein is DNA replication and repair protein RecF of Streptococcus pneumoniae (strain 70585).